The chain runs to 335 residues: DNA-directed RNA polymerase subunit alpha (335 aa).

The segment at 1–231 (MVREKITVST…DLLIPFLHTK (231 aa)) is alpha N-terminal domain (alpha-NTD). Residues 263-335 (KKMALKSIFI…FVIDLPKNKF (73 aa)) form an alpha C-terminal domain (alpha-CTD) region.

This sequence belongs to the RNA polymerase alpha chain family. In plastids the minimal PEP RNA polymerase catalytic core is composed of four subunits: alpha, beta, beta', and beta''. When a (nuclear-encoded) sigma factor is associated with the core the holoenzyme is formed, which can initiate transcription.

It localises to the plastid. Its subcellular location is the chloroplast. The enzyme catalyses RNA(n) + a ribonucleoside 5'-triphosphate = RNA(n+1) + diphosphate. Its function is as follows. DNA-dependent RNA polymerase catalyzes the transcription of DNA into RNA using the four ribonucleoside triphosphates as substrates. The polypeptide is DNA-directed RNA polymerase subunit alpha (Helianthus annuus (Common sunflower)).